The chain runs to 325 residues: MANLRELRDRIRSVNSTKKITKAQELIATSRITKAQARVEASQPYATEIHKVMERLAAASSLEHPMLREREGGKRAAVLVVSSDRGMAGGYNYNVFKKAAELEKLLEENGYEVVRYVTGNKGVGYYKFRGQEVAGAWTGFSQDPSWEETHDVRRHLIDGFNASSNGTARYRDGLNTDEGQEIQGFDQVHVVYTEFESMLTQTARAHQLLPIEPVIETVEIPEADGILDQSGEPTPDVEFEPDADTLLEALLPQYVSRSLFAMFLEAAAAESASRRNAMKSATDNATALVKDLSRVANQARQAQITQEITEIVGGASALGDSGESD.

Belongs to the ATPase gamma chain family. In terms of assembly, F-type ATPases have 2 components, CF(1) - the catalytic core - and CF(0) - the membrane proton channel. CF(1) has five subunits: alpha(3), beta(3), gamma(1), delta(1), epsilon(1). CF(0) has three main subunits: a, b and c.

Its subcellular location is the cell membrane. In terms of biological role, produces ATP from ADP in the presence of a proton gradient across the membrane. The gamma chain is believed to be important in regulating ATPase activity and the flow of protons through the CF(0) complex. The chain is ATP synthase gamma chain from Corynebacterium diphtheriae (strain ATCC 700971 / NCTC 13129 / Biotype gravis).